The following is a 331-amino-acid chain: MSMLAERRRKQKWAVDPRNTAWSNDDSKFGQKMLEKMGWSKGKGLGAQEQGATEHIKVKVKNNHLGLGATNNNEDNWIAHQDDFNQLLAALNTCHGQETADSSDNKEKKSFSLEEKSKISKNRVHYMKFTKGKDLSSRSETDLDCIFGKRRNKKLAQDGCSNSTADEADTSLTTTTTTTSAFTIQEYFAKRMAQLKSKSQAAAPGSDLSETPIEWKKGKKKTKEAAGTDIENSPQHKAKRHKKKKRVEAERGPAAKKRDQVELQPGGPSGDECSDASVEAAEDRVQTPDTQDDVPKPRKRRAKKTLQRPGGVAVDTAPDSAPVKKKKKVSR.

Disordered regions lie at residues 1 to 28, 156 to 175, and 197 to 331; these read MSML…DDSK, AQDG…LTTT, and SKSQ…KVSR. The G-patch domain maps to 26–72; sequence DSKFGQKMLEKMGWSKGKGLGAQEQGATEHIKVKVKNNHLGLGATNN. At Ser233 the chain carries Phosphoserine. Over residues 236-246 the composition is skewed to basic residues; the sequence is HKAKRHKKKKR. Residues 247 to 261 are compositionally biased toward basic and acidic residues; sequence VEAERGPAAKKRDQV. The tract at residues 254 to 328 is telomerase inhibitory domain (TID); the sequence is AAKKRDQVEL…DSAPVKKKKK (75 aa). Phosphoserine occurs at positions 269, 274, and 277. Residues 291–301 carry the TBM motif; sequence QDDVPKPRKRR. A compositionally biased stretch (basic residues) spans 297 to 306; it reads PRKRRAKKTL.

It belongs to the PINX1 family. Interacts with MCRS1, TERT, TERF1, NCL/nucleolin, and the telomerase RNA.

It is found in the nucleus. Its subcellular location is the nucleolus. The protein localises to the chromosome. It localises to the telomere. The protein resides in the centromere. It is found in the kinetochore. In terms of biological role, microtubule-binding protein essential for faithful chromosome segregation. Mediates TRF1 and TERT accumulation in nucleolus and enhances TRF1 binding to telomeres. Inhibits telomerase activity. May inhibit cell proliferation and act as tumor suppressor. This Rattus norvegicus (Rat) protein is PIN2/TERF1-interacting telomerase inhibitor 1.